The sequence spans 430 residues: Glutamine synthetase leaf isozyme, chloroplastic (430 aa).

Residues methionine 1–valine 49 constitute a chloroplast transit peptide. The region spanning isoleucine 77–glycine 157 is the GS beta-grasp domain. The segment at serine 99–glycine 119 is disordered. The 270-residue stretch at proline 161 to valine 430 folds into the GS catalytic domain.

It belongs to the glutamine synthetase family. Homooctamer.

Its subcellular location is the plastid. It localises to the chloroplast. It carries out the reaction L-glutamate + NH4(+) + ATP = L-glutamine + ADP + phosphate + H(+). Its function is as follows. The light-modulated chloroplast enzyme, encoded by a nuclear gene and expressed primarily in leaves, is responsible for the reassimilation of the ammonia generated by photorespiration. The polypeptide is Glutamine synthetase leaf isozyme, chloroplastic (GS2) (Pisum sativum (Garden pea)).